A 129-amino-acid chain; its full sequence is L5 homolog (129 aa).

A helical; Signal-anchor for type III membrane protein transmembrane segment spans residues 27-47 (YFYILVFEVIVALIILNFFFK). An intrachain disulfide couples cysteine 76 to cysteine 106.

The protein belongs to the chordopoxvirinae L5 family. As to quaternary structure, part of a stable entry-fusion complex (EFC) which is at least composed of proteins A16, A21, A28, G3, G9, H2, J5, and L5. Formation of the viral membrane is necessary for the assembly of the complex. Interacts with G3. In terms of processing, most cysteines are linked by disulfide bonds. They are created by the viral disulfide bond formation pathway, a poxvirus-specific redox pathway that operates on the cytoplasmic side of the MV membranes.

Its subcellular location is the virion membrane. In terms of biological role, envelope protein part of the entry-fusion complex responsible for the virus membrane fusion with host cell membrane during virus entry. Also plays a role in cell-cell fusion (syncytium formation). The chain is L5 homolog from Fowlpox virus (strain NVSL) (FPV).